A 709-amino-acid chain; its full sequence is DCC-interacting protein 13-alpha (709 aa).

The interval 1–428 (MPGIDKLPIE…RPPTARTSSS (428 aa)) is required for RAB5A binding. Residues 3–268 (GIDKLPIEET…DPLYVPDPDP (266 aa)) enclose the BAR domain. Positions 215 to 259 (SENLNEQLEEFLANIGTSVQNVRREMDSDIETMQQTIEDLEVASD) form a coiled coil. Residues 277-375 (LTRKAGYLNA…WICTINNISK (99 aa)) enclose the PH domain. Disordered stretches follow at residues 397-434 (AVTPSPSFQQRHESLRPAAGQSRPPTARTSSSGSLGSE), 467-491 (GQAKAFGQGGRRTNPFGESGGSTKS), and 645-709 (VKEK…ESEA). The residue at position 399 (Thr399) is a Phosphothreonine. At Ser401 the chain carries Phosphoserine. Positions 403–414 (SFQQRHESLRPA) match the F&amp;H motif. Phosphoserine; by PKA is present on Ser410. A PID domain is found at 496–656 (SILHQLFIVR…EKQQKELNKQ (161 aa)). Positions 621–673 (LAKQIALHAELDRRASEKQKEIERVKEKQQKELNKQKQIEKDLEEQSRLIAAS) form a coiled coil. Over residues 645-667 (VKEKQQKELNKQKQIEKDLEEQS) the composition is skewed to basic and acidic residues. Residues 674–693 (SRPNQASSEGQFVVLSSSQS) are compositionally biased toward polar residues. Phosphoserine occurs at positions 693 and 696. The segment covering 700–709 (EGGKKRESEA) has biased composition (basic and acidic residues).

As to quaternary structure, homodimer. Binds RAB5A/Rab5 through an N-terminal domain. This interaction is essential for its recruitment to endosomal membranes as well as its role in cell proliferation. Binds DCC and the catalytic domain of the inactive form of AKT2 through its PID domain. Binds PIK3CA and subunits of the NuRD/MeCP1 complex. Interacts with OCRL and INPP5B. Interacts with NTRK2. Interacts with APPL2; interaction is independent of follicle stimulating hormone stimulation; interaction is decreased by adiponectin in a time-dependent manner. Forms a complex with APPL2 and RUVBL2. Forms a complex comprising APPL2, RUVBL2, CTNNB1, HDAC1 and HDAC2; interaction reduces interaction between CTNNB1, HDAC1, HDAC2 and RUVBL2 leading to the decrease of deacetylase activity of this complex; affects the recruitment of repressive complexes to the Wnt target genes. Interacts with ANXA2. Interacts with TGFBR1; interaction is TGF beta dependent; mediates trafficking of the TGFBR1 from the endosomes to the nucleus via microtubules in a TRAF6-dependent manner. Interacts with PRKCZ. Interacts with PIK3R1 and APPL2. Interacts with ADIPOR1; ADIPOQ enhances this interaction; inhibites adiponectin-stimulated binding of APPL2 to ADIPOR1. In terms of processing, phosphorylation at Ser-410 by PKA severely impairs binding to OCRL. High levels in heart, ovary, pancreas and skeletal muscle.

It localises to the early endosome membrane. Its subcellular location is the nucleus. It is found in the cytoplasm. The protein resides in the endosome. The protein localises to the cell projection. It localises to the ruffle. Its subcellular location is the cytoplasmic vesicle. It is found in the phagosome. Its function is as follows. Multifunctional adapter protein that binds to various membrane receptors, nuclear factors and signaling proteins to regulate many processes, such as cell proliferation, immune response, endosomal trafficking and cell metabolism. Regulates signaling pathway leading to cell proliferation through interaction with RAB5A and subunits of the NuRD/MeCP1 complex. Functions as a positive regulator of innate immune response via activation of AKT1 signaling pathway by forming a complex with APPL1 and PIK3R1. Inhibits Fc-gamma receptor-mediated phagocytosis through PI3K/Akt signaling in macrophages. Regulates TLR4 signaling in activated macrophages. Involved in trafficking of the TGFBR1 from the endosomes to the nucleus via microtubules in a TRAF6-dependent manner. Plays a role in cell metabolism by regulating adiponecting and insulin signaling pathways. Required for fibroblast migration through HGF cell signaling. Positive regulator of beta-catenin/TCF-dependent transcription through direct interaction with RUVBL2/reptin resulting in the relief of RUVBL2-mediated repression of beta-catenin/TCF target genes by modulating the interactions within the beta-catenin-reptin-HDAC complex. In Homo sapiens (Human), this protein is DCC-interacting protein 13-alpha.